The chain runs to 293 residues: 4-diphosphocytidyl-2-C-methyl-D-erythritol kinase (293 aa).

Residue Lys16 is part of the active site. 99–109 (PMGAGLGGGSS) is a binding site for ATP. Residue Asp141 is part of the active site.

Belongs to the GHMP kinase family. IspE subfamily.

The enzyme catalyses 4-CDP-2-C-methyl-D-erythritol + ATP = 4-CDP-2-C-methyl-D-erythritol 2-phosphate + ADP + H(+). Its pathway is isoprenoid biosynthesis; isopentenyl diphosphate biosynthesis via DXP pathway; isopentenyl diphosphate from 1-deoxy-D-xylulose 5-phosphate: step 3/6. Its function is as follows. Catalyzes the phosphorylation of the position 2 hydroxy group of 4-diphosphocytidyl-2C-methyl-D-erythritol. The polypeptide is 4-diphosphocytidyl-2-C-methyl-D-erythritol kinase (Burkholderia cenocepacia (strain HI2424)).